The following is a 597-amino-acid chain: Indole-3-acetic acid-amido synthetase GH3.4 (597 aa).

The protein belongs to the IAA-amido conjugating enzyme family.

Catalyzes the synthesis of indole-3-acetic acid (IAA)-amino acid conjugates, providing a mechanism for the plant to cope with the presence of excess auxin. Strongly reactive with Glu, Gln, Trp, Asp, Ala, Leu, Phe, Gly, Tyr, Met, Ile and Val. Little or no product formation with His, Ser, Thr, Arg, Lys, or Cys. Also active on pyruvic and butyric acid analogs of IAA, PAA and the synthetic auxin naphthaleneacetic acid (NAA). The two chlorinated synthetic auxin herbicides 2,4-D and 3,6-dichloro-o-anisic acid (dicamba) cannot be used as substrates. The sequence is that of Indole-3-acetic acid-amido synthetase GH3.4 (GH3.4) from Arabidopsis thaliana (Mouse-ear cress).